Here is a 186-residue protein sequence, read N- to C-terminus: ATP synthase subunit delta (186 aa).

Belongs to the ATPase delta chain family. In terms of assembly, F-type ATPases have 2 components, F(1) - the catalytic core - and F(0) - the membrane proton channel. F(1) has five subunits: alpha(3), beta(3), gamma(1), delta(1), epsilon(1). F(0) has three main subunits: a(1), b(2) and c(10-14). The alpha and beta chains form an alternating ring which encloses part of the gamma chain. F(1) is attached to F(0) by a central stalk formed by the gamma and epsilon chains, while a peripheral stalk is formed by the delta and b chains.

The protein resides in the cell inner membrane. Its function is as follows. F(1)F(0) ATP synthase produces ATP from ADP in the presence of a proton or sodium gradient. F-type ATPases consist of two structural domains, F(1) containing the extramembraneous catalytic core and F(0) containing the membrane proton channel, linked together by a central stalk and a peripheral stalk. During catalysis, ATP synthesis in the catalytic domain of F(1) is coupled via a rotary mechanism of the central stalk subunits to proton translocation. Functionally, this protein is part of the stalk that links CF(0) to CF(1). It either transmits conformational changes from CF(0) to CF(1) or is implicated in proton conduction. The polypeptide is ATP synthase subunit delta (Brucella canis (strain ATCC 23365 / NCTC 10854 / RM-666)).